The primary structure comprises 298 residues: GTP cyclohydrolase FolE2 (298 aa).

The protein belongs to the GTP cyclohydrolase IV family.

It carries out the reaction GTP + H2O = 7,8-dihydroneopterin 3'-triphosphate + formate + H(+). It participates in cofactor biosynthesis; 7,8-dihydroneopterin triphosphate biosynthesis; 7,8-dihydroneopterin triphosphate from GTP: step 1/1. In terms of biological role, converts GTP to 7,8-dihydroneopterin triphosphate. The polypeptide is GTP cyclohydrolase FolE2 (Pseudomonas aeruginosa (strain UCBPP-PA14)).